The following is a 156-amino-acid chain: Arginine repressor (156 aa).

It belongs to the ArgR family.

Its subcellular location is the cytoplasm. The protein operates within amino-acid biosynthesis; L-arginine biosynthesis [regulation]. Regulates arginine biosynthesis genes. This Shewanella oneidensis (strain ATCC 700550 / JCM 31522 / CIP 106686 / LMG 19005 / NCIMB 14063 / MR-1) protein is Arginine repressor.